The sequence spans 236 residues: Small ribosomal subunit protein uS2c (236 aa).

Belongs to the universal ribosomal protein uS2 family.

Its subcellular location is the plastid. It is found in the chloroplast. This Daucus carota (Wild carrot) protein is Small ribosomal subunit protein uS2c (rps2).